An 800-amino-acid chain; its full sequence is Integrin beta-5 (800 aa).

The signal sequence occupies residues 1 to 24 (MPRAPALLFSCLLGLCALVPRLPG). Over 25–722 (LNICTSGSAT…PECGTAPSAM (698 aa)) the chain is Extracellular. A PSI domain is found at 27-76 (ICTSGSATSCEECLLIHPKCAWCFKEDFGSLRSVTSRCDLKANLIRNGCG). 19 cysteine pairs are disulfide-bonded: Cys-28–Cys-46, Cys-36–Cys-463, Cys-39–Cys-64, Cys-49–Cys-75, Cys-202–Cys-211, Cys-259–Cys-300, Cys-401–Cys-413, Cys-433–Cys-461, Cys-465–Cys-484, Cys-476–Cys-487, Cys-489–Cys-498, Cys-500–Cys-530, Cys-513–Cys-528, Cys-522–Cys-533, Cys-535–Cys-548, Cys-550–Cys-571, Cys-555–Cys-569, Cys-563–Cys-574, and Cys-576–Cys-585. The region spanning 136–378 (YPVDLYYLMD…QLIINAYNSI (243 aa)) is the VWFA domain. Ser-147 and Ser-149 together coordinate Mg(2+). Ca(2+) is bound by residues Ser-149, Asp-152, Asp-153, and Asp-184. Ca(2+) is bound by residues Asn-242, Asp-244, Pro-246, and Glu-247. Glu-247 is a binding site for Mg(2+). A glycan (N-linked (GlcNAc...) asparagine) is linked at Asn-347. Position 362 (Gly-362) interacts with Ca(2+). I-EGF domains are found at residues 465–499 (CSAGLEPDSARCSSNGTYVCGLCECNPGYLGTRCE), 500–549 (CQEG…SFCE), 550–586 (CDNFSCARNKGVLCSGHGECHCGECKCHAGYIGDNCN), and 587–626 (CSTDISTCQARDGHICSDRGHCVCGQCQCTEPGAFGETCE). A glycan (N-linked (GlcNAc...) asparagine) is linked at Asn-479. Residue Asn-552 is glycosylated (N-linked (GlcNAc...) asparagine). Residue Asn-586 is glycosylated (N-linked (GlcNAc...) asparagine). Intrachain disulfides connect Cys-587–Cys-610, Cys-594–Cys-608, Cys-602–Cys-613, Cys-615–Cys-625, Cys-628–Cys-631, Cys-635–Cys-683, Cys-641–Cys-662, Cys-644–Cys-658, and Cys-691–Cys-715. N-linked (GlcNAc...) asparagine glycans are attached at residues Asn-655 and Asn-706. Residues 723–743 (TILLAVVGSILLTGFALLVIW) form a helical membrane-spanning segment. The Cytoplasmic portion of the chain corresponds to 744 to 800 (KLLVTIHDRREFAKFQSERSRARYEMASNPLYRKPISTHTVDFTFNKFNKSYNGTVD). A Phosphoserine modification is found at Ser-771.

The protein belongs to the integrin beta chain family. In terms of assembly, heterodimer of an alpha and a beta subunit. Beta-5 (ITGB5) associates with alpha-V (ITGAV). Interacts with MYO10. Interacts with DAB2. Integrin ITGAV:ITGB5 interacts with FBLN5 (via N-terminus). ITGAV:ITGB5 interacts with CCN3. Interacts with tensin TNS3; TNS3 also interacts with PEAK1, thus acting as an adapter molecule to bridge the association of PEAK1 with ITGB5.

The protein resides in the cell membrane. Functionally, integrin alpha-V/beta-5 (ITGAV:ITGB5) is a receptor for fibronectin. It recognizes the sequence R-G-D in its ligand. In Bos taurus (Bovine), this protein is Integrin beta-5 (ITGB5).